Reading from the N-terminus, the 125-residue chain is Holo-[acyl-carrier-protein] synthase (125 aa).

Mg(2+) is bound by residues aspartate 8 and glutamate 57.

It belongs to the P-Pant transferase superfamily. AcpS family. Mg(2+) is required as a cofactor.

The protein localises to the cytoplasm. The catalysed reaction is apo-[ACP] + CoA = holo-[ACP] + adenosine 3',5'-bisphosphate + H(+). Functionally, transfers the 4'-phosphopantetheine moiety from coenzyme A to a Ser of acyl-carrier-protein. The protein is Holo-[acyl-carrier-protein] synthase of Nitrosospira multiformis (strain ATCC 25196 / NCIMB 11849 / C 71).